Consider the following 597-residue polypeptide: Elongation factor 4 (597 aa).

The 183-residue stretch at 2–184 (DHIRNFSIIA…ALIAKVPPPK (183 aa)) folds into the tr-type G domain. GTP-binding positions include 14 to 19 (DHGKST) and 131 to 134 (NKID).

It belongs to the TRAFAC class translation factor GTPase superfamily. Classic translation factor GTPase family. LepA subfamily.

It is found in the cell inner membrane. The catalysed reaction is GTP + H2O = GDP + phosphate + H(+). Required for accurate and efficient protein synthesis under certain stress conditions. May act as a fidelity factor of the translation reaction, by catalyzing a one-codon backward translocation of tRNAs on improperly translocated ribosomes. Back-translocation proceeds from a post-translocation (POST) complex to a pre-translocation (PRE) complex, thus giving elongation factor G a second chance to translocate the tRNAs correctly. Binds to ribosomes in a GTP-dependent manner. This is Elongation factor 4 from Burkholderia multivorans (strain ATCC 17616 / 249).